Reading from the N-terminus, the 1041-residue chain is Putative transcription elongation factor SPT5 homolog 1 (1041 aa).

Positions 1 to 133 are disordered; sequence MPRSRDEDDE…ERGDRRYERR (133 aa). Composition is skewed to acidic residues over residues 7–32, 53–69, and 99–114; these read EDDE…EEEE, DYAE…DEDY, and DDED…DDFI. A Phosphoserine modification is found at S59. Over residues 122–133 the composition is skewed to basic and acidic residues; that stretch reads PDERGDRRYERR. 4 KOW domains span residues 273–300, 425–452, 477–504, and 601–628; these read DLSR…VDNV, HFMK…VDEE, YFEP…VDQH, and VIAV…IYKG. Disordered stretches follow at residues 662-713 and 768-921; these read NRNG…GDDS and DTSR…GTGL. The span at 691-703 shows a compositional bias: gly residues; it reads GRGGGYNNSGGRH. The region spanning 712 to 739 is the KOW 5 domain; sequence DSLLGTTVKIRLGPFKGYRGPVVEVKGN. The span at 804-814 shows a compositional bias: basic and acidic residues; that stretch reads DGMRTPMRDRA. Polar residues-rich tracts occupy residues 835–844 and 893–904; these read SWGTSPQYQP and TPGQPMTPSSAS. Positions 988–1015 constitute a KOW 6 domain; it reads PPRKSDRVKIVGGQYRGSTGKLIGIDGS.

It belongs to the SPT5 family.

Its subcellular location is the nucleus. Functionally, may regulate transcription elongation by RNA polymerase II. May enhance transcriptional pausing at sites proximal to the promoter, which may in turn facilitate the assembly of an elongation competent RNA polymerase II complex. The sequence is that of Putative transcription elongation factor SPT5 homolog 1 from Arabidopsis thaliana (Mouse-ear cress).